A 76-amino-acid chain; its full sequence is MAKFKFKKGDTVEIIAGDDRGTKATVLAVLPKKNKVIVEGCKIVKKAIKPTEENTKGGHLNKEMPIDVSNVRKVEA.

The protein belongs to the universal ribosomal protein uL24 family. Part of the 50S ribosomal subunit.

Its function is as follows. One of two assembly initiator proteins, it binds directly to the 5'-end of the 23S rRNA, where it nucleates assembly of the 50S subunit. In terms of biological role, one of the proteins that surrounds the polypeptide exit tunnel on the outside of the subunit. This is Large ribosomal subunit protein uL24 from Sulfurimonas denitrificans (strain ATCC 33889 / DSM 1251) (Thiomicrospira denitrificans (strain ATCC 33889 / DSM 1251)).